The following is a 340-amino-acid chain: Phosphoribosylformylglycinamidine cyclo-ligase (340 aa).

The protein belongs to the AIR synthase family.

Its subcellular location is the cytoplasm. It carries out the reaction 2-formamido-N(1)-(5-O-phospho-beta-D-ribosyl)acetamidine + ATP = 5-amino-1-(5-phospho-beta-D-ribosyl)imidazole + ADP + phosphate + H(+). Its pathway is purine metabolism; IMP biosynthesis via de novo pathway; 5-amino-1-(5-phospho-D-ribosyl)imidazole from N(2)-formyl-N(1)-(5-phospho-D-ribosyl)glycinamide: step 2/2. This Streptococcus pneumoniae serotype 4 (strain ATCC BAA-334 / TIGR4) protein is Phosphoribosylformylglycinamidine cyclo-ligase.